A 167-amino-acid polypeptide reads, in one-letter code: Probable chorismate pyruvate-lyase (167 aa).

Substrate-binding residues include arginine 71, isoleucine 110, and glutamate 150.

This sequence belongs to the UbiC family.

The protein resides in the cytoplasm. The catalysed reaction is chorismate = 4-hydroxybenzoate + pyruvate. It functions in the pathway cofactor biosynthesis; ubiquinone biosynthesis. In terms of biological role, removes the pyruvyl group from chorismate, with concomitant aromatization of the ring, to provide 4-hydroxybenzoate (4HB) for the ubiquinone pathway. The chain is Probable chorismate pyruvate-lyase from Acinetobacter baylyi (strain ATCC 33305 / BD413 / ADP1).